Consider the following 81-residue polypeptide: UPF0248 protein TK0315 (81 aa).

The protein belongs to the UPF0248 family.

The sequence is that of UPF0248 protein TK0315 from Thermococcus kodakarensis (strain ATCC BAA-918 / JCM 12380 / KOD1) (Pyrococcus kodakaraensis (strain KOD1)).